Reading from the N-terminus, the 962-residue chain is Glycine dehydrogenase (decarboxylating) (962 aa).

N6-(pyridoxal phosphate)lysine is present on K709.

Belongs to the GcvP family. The glycine cleavage system is composed of four proteins: P, T, L and H. Pyridoxal 5'-phosphate serves as cofactor.

It catalyses the reaction N(6)-[(R)-lipoyl]-L-lysyl-[glycine-cleavage complex H protein] + glycine + H(+) = N(6)-[(R)-S(8)-aminomethyldihydrolipoyl]-L-lysyl-[glycine-cleavage complex H protein] + CO2. Functionally, the glycine cleavage system catalyzes the degradation of glycine. The P protein binds the alpha-amino group of glycine through its pyridoxal phosphate cofactor; CO(2) is released and the remaining methylamine moiety is then transferred to the lipoamide cofactor of the H protein. The chain is Glycine dehydrogenase (decarboxylating) from Shewanella sp. (strain MR-7).